A 133-amino-acid chain; its full sequence is Interleukin-4 (133 aa).

An N-terminal signal peptide occupies residues 1 to 24 (MGLTYQLIPALVCLLAFTSTFVHG). N-linked (GlcNAc...) asparagine glycans are attached at residues asparagine 28, asparagine 45, asparagine 62, asparagine 84, asparagine 96, and asparagine 102. 2 disulfide bridges follow: cysteine 48–cysteine 85 and cysteine 70–cysteine 113.

Belongs to the IL-4/IL-13 family.

It is found in the secreted. Functionally, participates in at least several B-cell activation processes as well as of other cell types. It is a costimulator of DNA-synthesis. It induces the expression of class II MHC molecules on resting B-cells. It enhances both secretion and cell surface expression of IgE and IgG1. It also regulates the expression of the low affinity Fc receptor for IgE (CD23) on both lymphocytes and monocytes. Positively regulates IL31RA expression in macrophages. Stimulates autophagy in dendritic cells by interfering with mTORC1 signaling and through the induction of RUFY4. The polypeptide is Interleukin-4 (IL4) (Felis catus (Cat)).